The sequence spans 598 residues: Elongation factor 4 (598 aa).

Residues 2–184 (KNIRNFSIIA…EIVRKIPAPE (183 aa)) form the tr-type G domain. GTP-binding positions include 14–19 (DHGKST) and 131–134 (NKID).

This sequence belongs to the TRAFAC class translation factor GTPase superfamily. Classic translation factor GTPase family. LepA subfamily.

Its subcellular location is the cell inner membrane. The enzyme catalyses GTP + H2O = GDP + phosphate + H(+). Required for accurate and efficient protein synthesis under certain stress conditions. May act as a fidelity factor of the translation reaction, by catalyzing a one-codon backward translocation of tRNAs on improperly translocated ribosomes. Back-translocation proceeds from a post-translocation (POST) complex to a pre-translocation (PRE) complex, thus giving elongation factor G a second chance to translocate the tRNAs correctly. Binds to ribosomes in a GTP-dependent manner. The chain is Elongation factor 4 from Histophilus somni (strain 2336) (Haemophilus somnus).